A 345-amino-acid chain; its full sequence is Nicotinate-nucleotide--dimethylbenzimidazole phosphoribosyltransferase (345 aa).

Glutamate 312 functions as the Proton acceptor in the catalytic mechanism.

The protein belongs to the CobT family.

The catalysed reaction is 5,6-dimethylbenzimidazole + nicotinate beta-D-ribonucleotide = alpha-ribazole 5'-phosphate + nicotinate + H(+). Its pathway is nucleoside biosynthesis; alpha-ribazole biosynthesis; alpha-ribazole from 5,6-dimethylbenzimidazole: step 1/2. Its function is as follows. Catalyzes the synthesis of alpha-ribazole-5'-phosphate from nicotinate mononucleotide (NAMN) and 5,6-dimethylbenzimidazole (DMB). In Bacteroides fragilis (strain YCH46), this protein is Nicotinate-nucleotide--dimethylbenzimidazole phosphoribosyltransferase.